The sequence spans 358 residues: Probable tartrate dehydrogenase/decarboxylase TtuC' (358 aa).

Mn(2+)-binding residues include aspartate 222, aspartate 246, and aspartate 250.

Belongs to the isocitrate and isopropylmalate dehydrogenases family. Requires Mg(2+) as cofactor. It depends on Mn(2+) as a cofactor. The cofactor is K(+).

The protein localises to the cytoplasm. The enzyme catalyses tartrate + NAD(+) = 2-hydroxy-3-oxosuccinate + NADH + H(+). It catalyses the reaction (2R,3S)-tartrate + NAD(+) = 2-hydroxy-3-oxosuccinate + NADH + H(+). The catalysed reaction is (2R,3R)-tartrate + NAD(+) = 2-hydroxy-3-oxosuccinate + NADH + H(+). It carries out the reaction (2R,3R)-tartrate + H(+) = (R)-glycerate + CO2. The enzyme catalyses (R)-malate + NAD(+) = pyruvate + CO2 + NADH. It participates in carbohydrate acid metabolism; tartrate degradation; 2-hydroxy-3-oxosuccinate from L-tartrate: step 1/1. Its pathway is carbohydrate acid metabolism; tartrate degradation; 2-hydroxy-3-oxosuccinate from meso-tartrate: step 1/1. It functions in the pathway carbohydrate acid metabolism; tartrate degradation; D-glycerate from L-tartrate: step 1/1. In terms of biological role, has multiple catalytic activities. Apart from catalyzing the oxidation of (+)-tartrate to oxaloglycolate, also converts meso-tartrate to D-glycerate and catalyzes the oxidative decarboxylation of D-malate to pyruvate. The sequence is that of Probable tartrate dehydrogenase/decarboxylase TtuC' (ttuC') from Agrobacterium vitis (Rhizobium vitis).